The chain runs to 1387 residues: DNA-directed RNA polymerase subunit beta (1387 aa).

It belongs to the RNA polymerase beta chain family. The RNAP catalytic core consists of 2 alpha, 1 beta, 1 beta' and 1 omega subunit. When a sigma factor is associated with the core the holoenzyme is formed, which can initiate transcription.

It carries out the reaction RNA(n) + a ribonucleoside 5'-triphosphate = RNA(n+1) + diphosphate. In terms of biological role, DNA-dependent RNA polymerase catalyzes the transcription of DNA into RNA using the four ribonucleoside triphosphates as substrates. The chain is DNA-directed RNA polymerase subunit beta from Xanthomonas campestris pv. campestris (strain 8004).